The following is a 273-amino-acid chain: Nitrogenase iron protein (273 aa).

Position 8 to 15 (8 to 15 (GKGGIGKS)) interacts with ATP. Cys95 is a binding site for [4Fe-4S] cluster. Arg98 carries the post-translational modification ADP-ribosylarginine; by dinitrogenase reductase ADP-ribosyltransferase. A [4Fe-4S] cluster-binding site is contributed by Cys130.

Belongs to the NifH/BchL/ChlL family. As to quaternary structure, homodimer. Requires [4Fe-4S] cluster as cofactor. Post-translationally, the reversible ADP-ribosylation of Arg-98 inactivates the nitrogenase reductase and regulates nitrogenase activity.

It carries out the reaction N2 + 8 reduced [2Fe-2S]-[ferredoxin] + 16 ATP + 16 H2O = H2 + 8 oxidized [2Fe-2S]-[ferredoxin] + 2 NH4(+) + 16 ADP + 16 phosphate + 6 H(+). Its function is as follows. The key enzymatic reactions in nitrogen fixation are catalyzed by the nitrogenase complex, which has 2 components: the iron protein and the molybdenum-iron protein. The polypeptide is Nitrogenase iron protein (Methanosarcina mazei (strain ATCC BAA-159 / DSM 3647 / Goe1 / Go1 / JCM 11833 / OCM 88) (Methanosarcina frisia)).